The primary structure comprises 65 residues: Large ribosomal subunit protein bL35 (65 aa).

Belongs to the bacterial ribosomal protein bL35 family.

This Chromobacterium violaceum (strain ATCC 12472 / DSM 30191 / JCM 1249 / CCUG 213 / NBRC 12614 / NCIMB 9131 / NCTC 9757 / MK) protein is Large ribosomal subunit protein bL35.